We begin with the raw amino-acid sequence, 231 residues long: NADH-ubiquinone oxidoreductase chain 4 (231 aa).

6 helical membrane passes run P1–I21, M34–L54, I63–G85, A89–Y111, I128–P148, and L156–S176.

Belongs to the complex I subunit 4 family.

The protein resides in the mitochondrion membrane. It catalyses the reaction a ubiquinone + NADH + 5 H(+)(in) = a ubiquinol + NAD(+) + 4 H(+)(out). In terms of biological role, core subunit of the mitochondrial membrane respiratory chain NADH dehydrogenase (Complex I) that is believed to belong to the minimal assembly required for catalysis. Complex I functions in the transfer of electrons from NADH to the respiratory chain. The immediate electron acceptor for the enzyme is believed to be ubiquinone. This Agkistrodon contortrix contortrix (Southern copperhead) protein is NADH-ubiquinone oxidoreductase chain 4 (MT-ND4).